Reading from the N-terminus, the 142-residue chain is Large ribosomal subunit protein uL16 (142 aa).

This sequence belongs to the universal ribosomal protein uL16 family. Part of the 50S ribosomal subunit.

Its function is as follows. Binds 23S rRNA and is also seen to make contacts with the A and possibly P site tRNAs. This chain is Large ribosomal subunit protein uL16, found in Fervidobacterium nodosum (strain ATCC 35602 / DSM 5306 / Rt17-B1).